Reading from the N-terminus, the 159-residue chain is uncharacterized protein (159 aa).

An N-acetyltransferase domain is found at 7–151 (LLINYKTLEE…NPLVWHPASE (145 aa)).

This is an uncharacterized protein from Bacillus licheniformis (strain ATCC 14580 / DSM 13 / JCM 2505 / CCUG 7422 / NBRC 12200 / NCIMB 9375 / NCTC 10341 / NRRL NRS-1264 / Gibson 46).